The following is a 203-amino-acid chain: Large ribosomal subunit protein uL18 (203 aa).

It belongs to the universal ribosomal protein uL18 family. Part of the 50S ribosomal subunit. Contacts the 5S and 23S rRNAs.

Functionally, this is one of the proteins that bind and probably mediate the attachment of the 5S RNA into the large ribosomal subunit, where it forms part of the central protuberance. The sequence is that of Large ribosomal subunit protein uL18 from Pyrococcus abyssi (strain GE5 / Orsay).